The following is a 444-amino-acid chain: MIDIKLLRLNSEIFYKSCRDRGFDTRILDEFFELDNEWKENLKQLNNIKHDKNSITMEISRRIKSGDDINDLKLKVESLNIDIQRLEGRQNEIDVKRNEILRLIPNLLADDVPRCFGDENNRLVRYYGRARVFSDDVKYFIENSGSGDYEEIDYRPKSHVDLISELNLADIERAGKIAGARFYFLKNRLFKLELALINYAVDFLSQRGYTVLEPPFMINYKSMSGATDIETFKDTLYKIEGDDLYLIATAEHPIASMLQDEILMEDELPIRVSGVSPCFRREAGAHGKDTKGIFRVHQFNKIEQFVFCKPEDSWDFFDELVRNSEDIYKSLKIPYRVVNVCSGELGNLAAKKYDIEAWFPAQGKFREIVSASNDTDYQARSLNIKYRSRDGNRFVHTLNSTAIATERILVAIMENFQDRNGKVIKIPEVLIPYTGFSEIGGDDN.

249-251 (TAE) contributes to the L-serine binding site. ATP is bound by residues 280 to 282 (RRE) and valine 296. Glutamate 303 serves as a coordination point for L-serine. 367 to 370 (EIVS) contacts ATP. Position 401 (threonine 401) interacts with L-serine.

This sequence belongs to the class-II aminoacyl-tRNA synthetase family. Type-1 seryl-tRNA synthetase subfamily. In terms of assembly, homodimer. The tRNA molecule binds across the dimer.

It is found in the cytoplasm. The enzyme catalyses tRNA(Ser) + L-serine + ATP = L-seryl-tRNA(Ser) + AMP + diphosphate + H(+). It catalyses the reaction tRNA(Sec) + L-serine + ATP = L-seryl-tRNA(Sec) + AMP + diphosphate + H(+). It functions in the pathway aminoacyl-tRNA biosynthesis; selenocysteinyl-tRNA(Sec) biosynthesis; L-seryl-tRNA(Sec) from L-serine and tRNA(Sec): step 1/1. Its function is as follows. Catalyzes the attachment of serine to tRNA(Ser). Is also able to aminoacylate tRNA(Sec) with serine, to form the misacylated tRNA L-seryl-tRNA(Sec), which will be further converted into selenocysteinyl-tRNA(Sec). The sequence is that of Serine--tRNA ligase from Picrophilus torridus (strain ATCC 700027 / DSM 9790 / JCM 10055 / NBRC 100828 / KAW 2/3).